A 376-amino-acid chain; its full sequence is Probable cysteine protease RDL3 (376 aa).

Residues 1–27 (MAISFRTLALLTLSVLLISISLGVVTA) form the signal peptide. Positions 28 to 126 (TESQRNEGEV…ERYQYKEGDV (99 aa)) are cleaved as a propeptide — activation peptide. N-linked (GlcNAc...) asparagine glycosylation is present at Asn80. Intrachain disulfides connect Cys149–Cys192 and Cys183–Cys226. Cys152 is a catalytic residue. N-linked (GlcNAc...) asparagine glycosylation is present at Asn270. A disulfide bond links Cys283 and Cys336. Catalysis depends on residues His290 and Asn311. Asn349 carries N-linked (GlcNAc...) asparagine glycosylation.

Belongs to the peptidase C1 family. In terms of tissue distribution, expressed in root hairs.

In terms of biological role, probable thiol protease. In Arabidopsis thaliana (Mouse-ear cress), this protein is Probable cysteine protease RDL3.